We begin with the raw amino-acid sequence, 189 residues long: MPKTRRRPRRSQRKRPPTPWPTSQGLDRVFFSDTQSTCLETVYKATGAPSLGDYVRPAYIVTPYWPPVQSIRSPGTPSMDALSAQLYSSLSLDSPPSPPREPLRPSRSLPRQSLIQPPTFHPPSSRPCANTPPSEMDTWNPPLGSTSQPCLFQTPDSGPKTCTPSGEAPLSACTSTSFPPPSPGPSCPT.

Basic residues predominate over residues 1–16 (MPKTRRRPRRSQRKRP). Residues 1–27 (MPKTRRRPRRSQRKRPPTPWPTSQGLD) form a disordered region. The Nuclear localization signal, and RNA-binding (RxRE) signature appears at 2-18 (PKTRRRPRRSQRKRPPT). Residues 56–70 (RPAYIVTPYWPPVQS) are homomultimerization. Position 70 is a phosphoserine; by host (Ser70). Positions 73–189 (SPGTPSMDAL…PPSPGPSCPT (117 aa)) are disordered. Residues 80–94 (DALSAQLYSSLSLDS) are compositionally biased toward low complexity. A Nuclear export signal motif is present at residues 82–93 (LSAQLYSSLSLD). Residues 123 to 131 (PSSRPCANT) are homomultimerization. Over residues 143 to 164 (LGSTSQPCLFQTPDSGPKTCTP) the composition is skewed to polar residues. Position 174 is a phosphothreonine; by host (Thr174). The residue at position 177 (Ser177) is a Phosphoserine; by host. Residues 178 to 189 (FPPPSPGPSCPT) are compositionally biased toward pro residues.

It belongs to the deltaretrovirus Rex protein family. Homomultimer. Multimeric assembly is essential for activity and involves XPO1. Binds to human XPO1 and KPNB1. Interacts (via N-terminal nuclear localization signal) with human NPM1.

It is found in the host nucleus. The protein resides in the host nucleolus. Its subcellular location is the host cytoplasm. Rex escorts unspliced gag-pro-pol and singly spliced env mRNAs out of the nucleus of infected cells. These mRNAs carry a recognition sequence called Rex responsive element (RxRE or XRE) located at the 3' region of the long terminal repeat (LTR). This function is essential since most HTLV proteins are translated from unspliced or partially spliced pre-mRNAs that cannot exit the nucleus by the pathway used by fully processed cellular mRNAs. Rex itself is translated from a fully spliced mRNA that probably readily exits the nucleus. Rex's nuclear localization signal (NLS) binds directly to KPNB1/importin beta-1 without previous binding to KPNA1/importin alpha-1. KPNB1 binds to the GDP bound form of RAN (Ran-GDP) and targets Rex to the nucleus. In the nucleus, the conversion from Ran-GDP to Ran-GTP dissociates Rex from KPNB1 and allows Rex's binding to the RRE in viral pre-mRNAs. Rex multimerizes on the RRE via cooperative assembly. This multimerization is critical for its full biological activity, since it may shield the viral RNA from being spliced or down-regulated, and probably exposes Rex's nuclear export signal (NES) to the surface. Rex can then form a complex with XPO1/CRM1, RANBP3 and Ran-GTP, leading to nuclear export of the complex. Conversion from Ran-GTP to Ran-GDP mediates dissociation of the Rex/RRE/XPO1/RANBP3/RAN complex, so that Rex can return to the nucleus for a subsequent round of export. This chain is Protein Rex, found in Human T-cell leukemia virus 1 (strain Japan ATK-1 subtype A) (HTLV-1).